The following is a 512-amino-acid chain: Cytokinin hydroxylase (512 aa).

The chain crosses the membrane as a helical span at residues 2–22 (MVTLVLKYVLVIVMTLILRVL). Residue C458 participates in heme binding.

It belongs to the cytochrome P450 family. The cofactor is heme. As to expression, specifically expressed in roots.

Its subcellular location is the membrane. It carries out the reaction N(6)-(dimethylallyl)adenosine 5'-phosphate + NADPH + O2 + H(+) = 9-ribosyl-trans-zeatin 5'-phosphate + NADP(+) + H2O. The catalysed reaction is N(6)-(dimethylallyl)adenosine 5'-diphosphate + NADPH + O2 + H(+) = 9-ribosyl-trans-zeatin 5'-diphosphate + NADP(+) + H2O. The enzyme catalyses N(6)-(dimethylallyl)adenosine 5'-triphosphate + NADPH + O2 + H(+) = 9-ribosyl-trans-zeatin 5'-triphosphate + NADP(+) + H2O. Cytokinin hydroxylase that catalyzes the biosynthesis of trans-zeatin via the isopentenyladenine riboside 5'-monophosphate (iPRMP)-dependent pathway. Can use isopentenyladenosine-5'-monophosphate, isopentenyladenosine-5'-diphosphate and isopentenyladenosine-5'-triphosphate as substrate. The chain is Cytokinin hydroxylase (CYP735A2) from Arabidopsis thaliana (Mouse-ear cress).